The sequence spans 337 residues: MDPRSEVILRQQDYLKGRVLLINAPNDALVSQLPTEIDASVWTWNYADYQGFVNTGTPAHFSVEFPSQEFDQAIIFVPKSKELLNYILHVVMSHLKTDQSVFLVGEKKGGVERAAKQLQNFGTILKLDSARHCQLWHLKIEKIEKIKPLESWLKTYTVQVNGQELTICALPGVFSQTHLDVGTAVLLPYLNQVKSGRIADFGCGAGIISCYLAKANSSNIIHALDIDAFALQSTEMTFSRNGIGSDQLRLQPVTGIADAPTELDAIVSNPPFHQGIHTNYDASEGLCQNAKKHLKASGELWIVANRFLNYPILIEKHFGQCEIKTDLQGFKVLYACA.

The protein belongs to the methyltransferase superfamily. RsmC family. Monomer.

It localises to the cytoplasm. It catalyses the reaction guanosine(1207) in 16S rRNA + S-adenosyl-L-methionine = N(2)-methylguanosine(1207) in 16S rRNA + S-adenosyl-L-homocysteine + H(+). In terms of biological role, specifically methylates the guanine in position 1207 of 16S rRNA in the 30S particle. This chain is Ribosomal RNA small subunit methyltransferase C, found in Acinetobacter baumannii (strain AB307-0294).